The sequence spans 167 residues: Leptin (167 aa).

A signal peptide spans M1–A21. A disulfide bond links C117 and C167.

This sequence belongs to the leptin family.

It localises to the secreted. Its function is as follows. Key player in the regulation of energy balance and body weight control. Once released into the circulation, has central and peripheral effects by binding LEPR, found in many tissues, which results in the activation of several major signaling pathways. In the hypothalamus, acts as an appetite-regulating factor that induces a decrease in food intake and an increase in energy consumption by inducing anorexinogenic factors and suppressing orexigenic neuropeptides, also regulates bone mass and secretion of hypothalamo-pituitary-adrenal hormones. In the periphery, increases basal metabolism, influences reproductive function, regulates pancreatic beta-cell function and insulin secretion, is pro-angiogenic for endothelial cell and affects innate and adaptive immunity. In the arcuate nucleus of the hypothalamus, activates by depolarization POMC neurons inducing FOS and SOCS3 expression to release anorexigenic peptides and inhibits by hyperpolarization NPY neurons inducing SOCS3 with a consequent reduction on release of orexigenic peptides. In addition to its known satiety inducing effect, has a modulatory role in nutrient absorption. In the intestine, reduces glucose absorption by enterocytes by activating PKC and leading to a sequential activation of p38, PI3K and ERK signaling pathways which exerts an inhibitory effect on glucose absorption. Acts as a growth factor on certain tissues, through the activation of different signaling pathways increases expression of genes involved in cell cycle regulation such as CCND1, via JAK2-STAT3 pathway, or VEGFA, via MAPK1/3 and PI3K-AKT1 pathways. May also play an apoptotic role via JAK2-STAT3 pathway and up-regulation of BIRC5 expression. Pro-angiogenic, has mitogenic activity on vascular endothelial cells and plays a role in matrix remodeling by regulating the expression of matrix metalloproteinases (MMPs) and tissue inhibitors of metalloproteinases (TIMPs). In innate immunity, modulates the activity and function of neutrophils by increasing chemotaxis and the secretion of oxygen radicals. Increases phagocytosis by macrophages and enhances secretion of pro-inflammatory mediators. Increases cytotoxic ability of NK cells. Plays a pro-inflammatory role, in synergy with IL1B, by inducing NOS2 which promotes the production of IL6, IL8 and Prostaglandin E2, through a signaling pathway that involves JAK2, PI3K, MAP2K1/MEK1 and MAPK14/p38. In adaptive immunity, promotes the switch of memory T-cells towards T helper-1 cell immune responses. Increases CD4(+)CD25(-) T cells proliferation and reduces autophagy during TCR (T cell receptor) stimulation, through MTOR signaling pathway activation and BCL2 up-regulation. In Mus musculus (Mouse), this protein is Leptin (Lep).